The sequence spans 358 residues: Alanine racemase (358 aa).

Lysine 35 serves as the catalytic Proton acceptor; specific for D-alanine. Residue lysine 35 is modified to N6-(pyridoxal phosphate)lysine. Arginine 130 lines the substrate pocket. Tyrosine 255 (proton acceptor; specific for L-alanine) is an active-site residue. Methionine 303 lines the substrate pocket.

It belongs to the alanine racemase family. The cofactor is pyridoxal 5'-phosphate.

The enzyme catalyses L-alanine = D-alanine. It participates in amino-acid biosynthesis; D-alanine biosynthesis; D-alanine from L-alanine: step 1/1. Its function is as follows. Catalyzes the interconversion of L-alanine and D-alanine. May also act on other amino acids. This Shewanella oneidensis (strain ATCC 700550 / JCM 31522 / CIP 106686 / LMG 19005 / NCIMB 14063 / MR-1) protein is Alanine racemase (alr).